The sequence spans 311 residues: Ribosomal protein L11 methyltransferase (311 aa).

4 residues coordinate S-adenosyl-L-methionine: Thr-162, Gly-183, Asp-205, and Asn-248.

The protein belongs to the methyltransferase superfamily. PrmA family.

The protein localises to the cytoplasm. It catalyses the reaction L-lysyl-[protein] + 3 S-adenosyl-L-methionine = N(6),N(6),N(6)-trimethyl-L-lysyl-[protein] + 3 S-adenosyl-L-homocysteine + 3 H(+). Functionally, methylates ribosomal protein L11. This Bacillus subtilis (strain 168) protein is Ribosomal protein L11 methyltransferase.